A 40-amino-acid chain; its full sequence is Photosystem II reaction center protein Y (40 aa).

The helical transmembrane segment at 5 to 23 (LVLVASPILLAVGWAGFNI) threads the bilayer.

This sequence belongs to the PsbY family. PSII is composed of 1 copy each of membrane proteins PsbA, PsbB, PsbC, PsbD, PsbE, PsbF, PsbH, PsbI, PsbJ, PsbK, PsbL, PsbM, PsbT, PsbX, PsbY, PsbZ, Psb30/Ycf12, peripheral proteins PsbO, CyanoQ (PsbQ), PsbU, PsbV and a large number of cofactors. It forms dimeric complexes.

The protein localises to the cellular thylakoid membrane. In terms of biological role, loosely associated component of the core of photosystem II (PSII), it is not always seen in crystals. PSII is a light-driven water plastoquinone oxidoreductase, using light energy to abstract electrons from H(2)O, generating a proton gradient subsequently used for ATP formation. The sequence is that of Photosystem II reaction center protein Y from Synechococcus sp. (strain RCC307).